A 361-amino-acid chain; its full sequence is Peptide chain release factor 1 (361 aa).

The residue at position 236 (Q236) is an N5-methylglutamine.

Belongs to the prokaryotic/mitochondrial release factor family. Post-translationally, methylated by PrmC. Methylation increases the termination efficiency of RF1.

The protein resides in the cytoplasm. Functionally, peptide chain release factor 1 directs the termination of translation in response to the peptide chain termination codons UAG and UAA. This chain is Peptide chain release factor 1, found in Lactobacillus delbrueckii subsp. bulgaricus (strain ATCC BAA-365 / Lb-18).